The primary structure comprises 111 residues: Prefoldin subunit 2 (111 aa).

Coiled coils occupy residues 1–36 (MEQRNNVFQAKYNEYKQILEELQTKIIELGHDKDEH) and 72–92 (LETKKENIEGTISKMKETLIQ).

The protein belongs to the prefoldin subunit beta family. As to quaternary structure, heterohexamer of two PFD-alpha type and four PFD-beta type subunits.

Its subcellular location is the cytoplasm. Its function is as follows. Binds specifically to cytosolic chaperonin (c-CPN) and transfers target proteins to it. Binds to nascent polypeptide chain and promotes folding in an environment in which there are many competing pathways for nonnative proteins. The polypeptide is Prefoldin subunit 2 (GIM4) (Saccharomyces cerevisiae (strain ATCC 204508 / S288c) (Baker's yeast)).